The chain runs to 55 residues: Small polypeptide DEVIL 10 (55 aa).

Asn-7 carries an N-linked (GlcNAc...) asparagine glycan. The interval 19–50 is required for DVL/RTFL small polypeptide activity; sequence RFGDRCLLMAKQQRTRLYILRRCVSMLLCWHD. A helical membrane pass occupies residues 32–48; the sequence is RTRLYILRRCVSMLLCW.

It belongs to the DVL/RTFL small polypeptides family.

It localises to the cell membrane. Functionally, small polypeptide acting as a regulatory molecule which coordinates cellular responses required for differentiation, growth and development, probably by restricting polar cell proliferation in lateral organs and coordinating socket cell recruitment and differentiation at trichome sites. In Arabidopsis thaliana (Mouse-ear cress), this protein is Small polypeptide DEVIL 10.